The chain runs to 207 residues: MNSLSTSAFSLGLLLVMATAFPTPGPLAGDSKDDATSNSLPLTSANKVEELIKYILGKISALRKEMCDKFNKCEDSKEALAENNLHLPKLEGKDGCFQSGFNQETCLTRITTGLVEFQLHLNILQNNYEGDKENVKSVHMSTKILVQMLKSKVKNQDEVTTPDPTTDASLQAILQSQDECVKHTTIHLILRSLEDFLQFSLRAVRIM.

A signal peptide spans 1-20 (MNSLSTSAFSLGLLLVMATA). Cysteines 67 and 73 form a disulfide. At serine 76 the chain carries Phosphoserine. An intrachain disulfide couples cysteine 96 to cysteine 106.

Belongs to the IL-6 superfamily. As to quaternary structure, component of a hexamer of two molecules each of IL6, IL6R and IL6ST; first binds to IL6R to associate with the signaling subunit IL6ST. Interacts with IL6R (via the N-terminal ectodomain); this interaction may be affected by IL6R-binding with SORL1, hence decreasing IL6 cis signaling. Interacts with SORL1 (via the N-terminal ectodomain); this interaction leads to IL6 internalization and lysosomal degradation. May form a trimeric complex with the soluble SORL1 ectodomain and soluble IL6R receptor; this interaction might stabilize circulating IL6, hence promoting IL6 trans signaling.

Its subcellular location is the secreted. Cytokine with a wide variety of biological functions in immunity, tissue regeneration, and metabolism. Binds to IL6R, then the complex associates to the signaling subunit IL6ST/gp130 to trigger the intracellular IL6-signaling pathway. The interaction with the membrane-bound IL6R and IL6ST stimulates 'classic signaling', whereas the binding of IL6 and soluble IL6R to IL6ST stimulates 'trans-signaling'. Alternatively, 'cluster signaling' occurs when membrane-bound IL6:IL6R complexes on transmitter cells activate IL6ST receptors on neighboring receiver cells. In terms of biological role, IL6 is a potent inducer of the acute phase response. Rapid production of IL6 contributes to host defense during infection and tissue injury, but excessive IL6 synthesis is involved in disease pathology. In the innate immune response, is synthesized by myeloid cells, such as macrophages and dendritic cells, upon recognition of pathogens through toll-like receptors (TLRs) at the site of infection or tissue injury. In the adaptive immune response, is required for the differentiation of B cells into immunoglobulin-secreting cells. Plays a major role in the differentiation of CD4(+) T cell subsets. Essential factor for the development of T follicular helper (Tfh) cells that are required for the induction of germinal-center formation. Required to drive naive CD4(+) T cells to the Th17 lineage. Also required for proliferation of myeloma cells and the survival of plasmablast cells. Its function is as follows. Acts as an essential factor in bone homeostasis and on vessels directly or indirectly by induction of VEGF, resulting in increased angiogenesis activity and vascular permeability. Induces, through 'trans-signaling' and synergistically with IL1B and TNF, the production of VEGF. Involved in metabolic controls, is discharged into the bloodstream after muscle contraction increasing lipolysis and improving insulin resistance. 'Trans-signaling' in central nervous system also regulates energy and glucose homeostasis. Mediates, through GLP-1, crosstalk between insulin-sensitive tissues, intestinal L cells and pancreatic islets to adapt to changes in insulin demand. Also acts as a myokine. Plays a protective role during liver injury, being required for maintenance of tissue regeneration. Also has a pivotal role in iron metabolism by regulating HAMP/hepcidin expression upon inflammation or bacterial infection. Through activation of IL6ST-YAP-NOTCH pathway, induces inflammation-induced epithelial regeneration. The sequence is that of Interleukin-6 (IL6) from Canis lupus familiaris (Dog).